The following is a 510-amino-acid chain: NAD(P)H-quinone oxidoreductase subunit 2 B, chloroplastic (510 aa).

Helical transmembrane passes span 24–44 (LLLF…GLIL), 57–77 (IPWL…ALLF), 99–119 (IFQF…VEYI), 124–144 (MAIT…MFLC), 150–170 (ITIF…SGYT), 183–203 (YLLM…WLYG), 227–247 (PGIS…LSPA), 295–315 (WHLL…LIAI), 323–343 (MLAY…IVGD), 347–367 (GYAS…GTFA), 395–415 (ALSS…AGFF), 418–438 (LHLF…IGLL), and 484–504 (MIVC…IIAI).

The protein belongs to the complex I subunit 2 family. NDH is composed of at least 16 different subunits, 5 of which are encoded in the nucleus.

It is found in the plastid. It localises to the chloroplast thylakoid membrane. The catalysed reaction is a plastoquinone + NADH + (n+1) H(+)(in) = a plastoquinol + NAD(+) + n H(+)(out). It catalyses the reaction a plastoquinone + NADPH + (n+1) H(+)(in) = a plastoquinol + NADP(+) + n H(+)(out). Its function is as follows. NDH shuttles electrons from NAD(P)H:plastoquinone, via FMN and iron-sulfur (Fe-S) centers, to quinones in the photosynthetic chain and possibly in a chloroplast respiratory chain. The immediate electron acceptor for the enzyme in this species is believed to be plastoquinone. Couples the redox reaction to proton translocation, and thus conserves the redox energy in a proton gradient. The polypeptide is NAD(P)H-quinone oxidoreductase subunit 2 B, chloroplastic (Chloranthus spicatus (Chulantree)).